A 234-amino-acid chain; its full sequence is Glutathione S-transferase sirG (234 aa).

In terms of domain architecture, GST N-terminal spans 15–99 (LYVVKATPTS…YLTDAYDHEG (85 aa)). The GST C-terminal domain occupies 105–230 (DLWERTQVNN…KALSQKFRPS (126 aa)).

It belongs to the GST superfamily.

The catalysed reaction is RX + glutathione = an S-substituted glutathione + a halide anion + H(+). It functions in the pathway mycotoxin biosynthesis. Its function is as follows. Glutathione S-transferase; part of the gene cluster that mediates the biosynthesis of sirodesmin PL, an epipolythiodioxopiperazine (ETP) characterized by a disulfide bridged cyclic dipeptide and that acts as a phytotoxin which is involved in the blackleg didease of canola. SirD catalyzes the O-prenylation of L-tyrosine (L-Tyr) in the presence of dimethylallyl diphosphate (DMAPP) to yield 4-O-dimethylallyl-L-Tyr, and therefore represents probably the first pathway-specific enzyme in the biosynthesis of sirodesmin PL. 4-O-dimethylallyl-L-Tyr, then undergoes condensation with L-Ser in a reaction catalyzed by the non-ribosomal peptide synthase sirP to form the diketopiperazine (DKP) backbone. Further bishydroxylation of the DKP performed by the cytochrome P450 monooxygenase sirC leads to the production of the intermediate phomamide. This step is essential to form the reactive thiol group required for toxicity of sirodesmin PL. The next steps of sirodesmin biosynthesis are not well understood yet, but some predictions could be made from intermediate compounds identification. Phomamide is converted into phomalizarine via oxidation, probably by sirT. Further oxidation, methylation (by sirM or sirN) and reduction steps convert phomalizarine to deacetyl sirodesmin. Finally, acetyltransferase sirH probably acetylates deacetyl sirodesmin to produce sirodesmin PL. The protein is Glutathione S-transferase sirG of Leptosphaeria maculans (Blackleg fungus).